We begin with the raw amino-acid sequence, 399 residues long: Adenylate cyclase (399 aa).

Over residues Met-1–Ser-10 the composition is skewed to polar residues. A disordered region spans residues Met-1 to Thr-35. Basic and acidic residues predominate over residues Pro-24 to Glu-33. Positions Arg-198 to Thr-307 constitute a Guanylate cyclase domain. Positions 203 and 247 each coordinate Mg(2+).

The protein belongs to the adenylyl cyclase class-3 family. Mg(2+) serves as cofactor.

The catalysed reaction is ATP = 3',5'-cyclic AMP + diphosphate. This Streptomyces griseus protein is Adenylate cyclase (cya).